The following is a 555-amino-acid chain: Hydroxylamine reductase (555 aa).

[4Fe-4S] cluster is bound by residues Cys-3, Cys-6, Cys-18, and Cys-25. Residues His-252, Glu-276, Cys-320, Cys-407, Cys-435, Cys-460, Glu-494, and Lys-496 each coordinate hybrid [4Fe-2O-2S] cluster. Cys-407 is modified (cysteine persulfide).

The protein belongs to the HCP family. [4Fe-4S] cluster serves as cofactor. Requires hybrid [4Fe-2O-2S] cluster as cofactor.

The protein localises to the cytoplasm. It carries out the reaction A + NH4(+) + H2O = hydroxylamine + AH2 + H(+). Its function is as follows. Catalyzes the reduction of hydroxylamine to form NH(3) and H(2)O. In Burkholderia lata (strain ATCC 17760 / DSM 23089 / LMG 22485 / NCIMB 9086 / R18194 / 383), this protein is Hydroxylamine reductase.